Here is a 259-residue protein sequence, read N- to C-terminus: UPF0246 protein PFL_1025 (259 aa).

The protein belongs to the UPF0246 family.

In Pseudomonas fluorescens (strain ATCC BAA-477 / NRRL B-23932 / Pf-5), this protein is UPF0246 protein PFL_1025.